The primary structure comprises 273 residues: MHYWGKLLGLIFGVVSGAGFWGIVIGLFIGHMLDRASVRGNQGFFANNQSRQLLFFSSTFQVMGHITKSKGRVTETDIRLASQLMERMQLHGQARIAAQQAFREGKEPNFPLRETLRQLRRACFGRSDLIRMFLEIQLQAAFSDGQLHPNERTVLFIIADELGISRNQFEQFLAMMEGGRNFGDGGEWQQRQYGGYQKAAQGPTLADACKVLGVREKDDATTIKRAYRRLMSEHHPDKLVAKGLPPEMMEIAKQKAQSIQAAYDLIKKEKGFK.

Over 1–6 (MHYWGK) the chain is Periplasmic. A helical transmembrane segment spans residues 7 to 31 (LLGLIFGVVSGAGFWGIVIGLFIGH). Over 32–273 (MLDRASVRGN…DLIKKEKGFK (242 aa)) the chain is Cytoplasmic. The region spanning 207-273 (DACKVLGVRE…DLIKKEKGFK (67 aa)) is the J domain.

As to quaternary structure, homodimer.

The protein resides in the cell inner membrane. Functionally, regulatory DnaK co-chaperone. Direct interaction between DnaK and DjlA is needed for the induction of the wcaABCDE operon, involved in the synthesis of a colanic acid polysaccharide capsule, possibly through activation of the RcsB/RcsC phosphotransfer signaling pathway. The colanic acid capsule may help the bacterium survive conditions outside the host. The sequence is that of Co-chaperone protein DjlA from Photorhabdus laumondii subsp. laumondii (strain DSM 15139 / CIP 105565 / TT01) (Photorhabdus luminescens subsp. laumondii).